A 104-amino-acid chain; its full sequence is uncharacterized protein (104 aa).

This is an uncharacterized protein from Escherichia coli (Bacteriophage T4).